Reading from the N-terminus, the 254-residue chain is Alcohol dehydrogenase (254 aa).

9 to 32 is an NAD(+) binding site; sequence IFVAGLGGIGLDTSRELVKRDLKN. Serine 138 contacts substrate. Tyrosine 151 serves as the catalytic Proton acceptor.

This sequence belongs to the short-chain dehydrogenases/reductases (SDR) family. As to quaternary structure, homodimer.

The enzyme catalyses a primary alcohol + NAD(+) = an aldehyde + NADH + H(+). It carries out the reaction a secondary alcohol + NAD(+) = a ketone + NADH + H(+). This Drosophila paulistorum (Fruit fly) protein is Alcohol dehydrogenase (Adh).